Reading from the N-terminus, the 565-residue chain is uncharacterized protein (565 aa).

Transmembrane regions (helical) follow at residues 4–26, 33–55, 68–90, 97–119, and 162–184; these read FVQF…AVWV, GYGL…VGAA, SLLY…VNAL, YAIL…TQFF, and ISAM…IILL. RCK C-terminal domains are found at residues 210 to 295 and 296 to 379; these read PNVD…LGPE and VPDA…IFGV. Transmembrane regions (helical) follow at residues 389–411, 415–432, 453–472, 482–504, and 539–561; these read LLTL…PAFG, GLGN…VSSI, LGLI…DLLT, IFIV…GFHI, and WLGF…YFAM.

It belongs to the AAE transporter (TC 2.A.81) family.

Its subcellular location is the cell membrane. This is an uncharacterized protein from Bordetella parapertussis (strain 12822 / ATCC BAA-587 / NCTC 13253).